We begin with the raw amino-acid sequence, 271 residues long: Ribose-phosphate pyrophosphokinase 2 (271 aa).

ATP-binding positions include 34 to 36 (DGE) and 82 to 83 (RQ). Mg(2+) contacts are provided by His-115 and Asp-150. Residue Lys-173 is part of the active site. Residues Arg-175, Asp-199, and 203–207 (STGGT) each bind D-ribose 5-phosphate.

Belongs to the ribose-phosphate pyrophosphokinase family. Class III (archaeal) subfamily. Requires Mg(2+) as cofactor.

It is found in the cytoplasm. The enzyme catalyses D-ribose 5-phosphate + ATP = 5-phospho-alpha-D-ribose 1-diphosphate + AMP + H(+). The protein operates within metabolic intermediate biosynthesis; 5-phospho-alpha-D-ribose 1-diphosphate biosynthesis; 5-phospho-alpha-D-ribose 1-diphosphate from D-ribose 5-phosphate (route I): step 1/1. In terms of biological role, involved in the biosynthesis of the central metabolite phospho-alpha-D-ribosyl-1-pyrophosphate (PRPP) via the transfer of pyrophosphoryl group from ATP to 1-hydroxyl of ribose-5-phosphate (Rib-5-P). This chain is Ribose-phosphate pyrophosphokinase 2, found in Archaeoglobus fulgidus (strain ATCC 49558 / DSM 4304 / JCM 9628 / NBRC 100126 / VC-16).